A 312-amino-acid polypeptide reads, in one-letter code: Polyprenyl transferase atnF (312 aa).

Asn9 carries an N-linked (GlcNAc...) asparagine glycan. 9 helical membrane-spanning segments follow: residues 30 to 50 (LHTI…FFYA), 64 to 84 (FIGI…WNDI), 111 to 131 (AMWV…WLLG), 132 to 152 (ADVT…PLCK), 154 to 174 (IIWA…LPPW), 185 to 205 (GLLP…LDLI), 229 to 249 (YLKA…VLAA), 255 to 275 (GFLL…WSIM), and 288 to 308 (IFLV…LNVS).

Belongs to the UbiA prenyltransferase family. Requires Mg(2+) as cofactor.

It localises to the membrane. It participates in secondary metabolite biosynthesis; terpenoid biosynthesis. Its function is as follows. Polyprenyl transferase; part of the gene cluster that mediates the biosynthesis of the meroterpenoids arthripenoids. The pathway begins with the HR-PKS atnH that catalyzes two chain-extension steps to form a reduced triketide, which then primes the SAT domain in the NR-PKS atnG to initiate three more cycles of extension to give a linear hexaketide corresponding to the polyketide part of arthripenoids. The FAD-dependent monooxygenase atnJ then performs an oxidative decarboxylation at C11 of the atnH/atnG product, via an electrophilic aromatic hydroxylation with concomitant ipso-decarboxylation. The membrane-bound polyprenyl transferase atnF then introduces a farnesyl group before the FAD-dependent monooxygenase atnK functions as the first epoxidase on terminal C12'-C13' olefin, followed by a second epoxidation on C7'-C8' catalyzed by atnA. The terpene cyclase/mutase atnI then initiates the sequential tricyclic ring formation through protonation of the terminal epoxide and catalyzes the regioselective and stereoselective 6/6/6-tricyclic ring formation. The cytochrome P450 monooxygenase atnM is responsible for hydroxylating both C1' and C10'. The next steps may involve ketoreduction and acetyl transfer by the ketoreductase atnB and the acetyltransferase atnC, and lead to the production of arthripenoid B, the final biosynthetic product of the atn cluster. The hydroquinone moiety in arthripenoid B is prone to undergo spontaneous oxidation to afford a benzoquinone compound, a key intermediate for generating structure diversity. For instance, addition of a cysteine followed by ring contraction gives arthripenoid A, tautomerization gives the main product arthripenoid C, addition of a molecular of water or amine affords arthripenoid D or E, respectively, and loss of one water forms arthripenoid F. This chain is Polyprenyl transferase atnF, found in Arthrinium sp.